A 109-amino-acid chain; its full sequence is uncharacterized protein (109 aa).

The 59-residue stretch at 42-100 (LEEKLKQEKIDRKYLAEVTNIPYTTVSRIMRAEANREFNPEIDTILKIAKYFNCTMDEV) folds into the HTH cro/C1-type domain. Positions 53 to 72 (RKYLAEVTNIPYTTVSRIMR) form a DNA-binding region, H-T-H motif.

This is an uncharacterized protein from Rickettsia conorii (strain ATCC VR-613 / Malish 7).